We begin with the raw amino-acid sequence, 311 residues long: Terpentetriene synthase (311 aa).

Positions 77 to 81 match the DDXXD motif motif; the sequence is DDRWD.

Belongs to the terpene synthase family. In terms of assembly, homodimer. Requires Mg(2+) as cofactor.

The enzyme catalyses terpentedienyl diphosphate = terpentetriene + diphosphate. Its pathway is antibiotic biosynthesis. In terms of biological role, involved in the production of the isoprenoid antibiotic terpentecin. Converts terpentedienol diphosphate (TDP) into terpentetriene (TTE). Can also accept geranylgeranyl diphosphate (GGDP) and farnesyl diphosphate (FDP) as substrates. The protein is Terpentetriene synthase (cyc2) of Kitasatospora griseola (Streptomyces griseolosporeus).